A 344-amino-acid polypeptide reads, in one-letter code: L-rhamnose-proton symporter (344 aa).

The next 10 membrane-spanning stretches (helical) occupy residues 4 to 24 (AITM…CFYA), 38 to 58 (WSVG…ALLL), 68 to 88 (FSLS…IGNI), 101 to 121 (MGIG…TPII), 137 to 157 (TLLG…AGQL), 175 to 195 (LVLA…MNAA), 214 to 234 (LPSY…FCFI), 259 to 279 (VLLS…YAWG), 290 to 310 (ISWM…GLVL), and 323 to 343 (VLSL…IGMA).

It belongs to the L-rhamnose transporter (TC 2.A.7.6) family.

It is found in the cell inner membrane. It catalyses the reaction L-rhamnopyranose(in) + H(+)(in) = L-rhamnopyranose(out) + H(+)(out). Its function is as follows. Uptake of L-rhamnose across the cytoplasmic membrane with the concomitant transport of protons into the cell (symport system). The sequence is that of L-rhamnose-proton symporter from Escherichia coli (strain 55989 / EAEC).